Reading from the N-terminus, the 538-residue chain is MEIKEISVPQQGVVADYMNGKKEIQSCFDYMLTEDAFKQRLHDLREREFFRQDVVAHLLEYNTKLQAGESTLQNVKALGDENTYVVIAGQQAGLLTGPLYTIHKVISILKLAKEKEESLGVKVVPVFWIAGEDHDMDEINHTFLAKNKKMKKTIFYDRNPKKASASESELSVEDCRNWIEEIFKTYPETNFTKDVLKFVDDALEKSNTYVDFFAHLITKIFANSGLILVDSHHPELRKLEIPFFKRIISKYKEVQEGLRNQQEVIKELGYKPIIETKSHAVHIFMEIDNERVLLEEHQGKFVGKDGAHSFSYEELIEEMERNPARFSNNVVTRPLMQEYVFPTLAFIGGPGELAYWSELQQVFHTVGFQMPPVVPRLTITYVERCIATDLFDLQLRESDPFLNDVDKLRENWLSNQIEEPIDNHFEKAKKEIADIHTSLQQFVKKIEPGLSAFAGKNELKINEQIELLERMLKRNVEKKYEVQLNKFRRIQFALRPLGAPQERVWNVCYYLNQFGLDFVDRVMENPFSWDGKHHVIKL.

Residues 248–268 (ISKYKEVQEGLRNQQEVIKEL) are a coiled coil.

It belongs to the BshC family.

Functionally, involved in bacillithiol (BSH) biosynthesis. May catalyze the last step of the pathway, the addition of cysteine to glucosamine malate (GlcN-Mal) to generate BSH. The protein is Putative cysteine ligase BshC of Bacillus cereus (strain G9842).